Here is a 572-residue protein sequence, read N- to C-terminus: Mitochondrial distribution and morphology protein 34 (572 aa).

Residues 1 to 195 (MAFNFNWSPL…LPAIIHRLSL (195 aa)) enclose the SMP-LTD domain. 3 disordered regions span residues 210-239 (TQAEKAETANGEGPGQDPLASPPQDPVDAL), 330-423 (SASI…PLSP), and 455-482 (RDMGGPSSTSDPATQATQSEDTSATPRA). Polar residues predominate over residues 330–347 (SASIASMQTRSSTPSHTF). Positions 358–370 (RHSKAHSRKRKKR) are enriched in basic residues. A compositionally biased stretch (basic and acidic residues) spans 371-381 (VVDLRRPKTTD). 2 stretches are compositionally biased toward polar residues: residues 387 to 400 (SDESAFTESTSAPS) and 460 to 480 (PSSTSDPATQATQSEDTSATP).

Belongs to the MDM34 family. In terms of assembly, component of the ER-mitochondria encounter structure (ERMES) or MDM complex, composed of mmm1, mdm10, mdm12 and mdm34.

It is found in the mitochondrion outer membrane. Component of the ERMES/MDM complex, which serves as a molecular tether to connect the endoplasmic reticulum (ER) and mitochondria. Components of this complex are involved in the control of mitochondrial shape and protein biogenesis, and function in nonvesicular lipid trafficking between the ER and mitochondria. Mdm34 is required for the interaction of the ER-resident membrane protein mmm1 and the outer mitochondrial membrane-resident beta-barrel protein mdm10. In Aspergillus clavatus (strain ATCC 1007 / CBS 513.65 / DSM 816 / NCTC 3887 / NRRL 1 / QM 1276 / 107), this protein is Mitochondrial distribution and morphology protein 34.